Here is a 233-residue protein sequence, read N- to C-terminus: Ion-translocating oxidoreductase complex subunit E (233 aa).

Helical transmembrane passes span 18–38 (ALVQLLGLCPLLAVSSTATNA), 39–59 (LGLGLATTLVLVCTNTAVSAL), 69–89 (IPIYVMIIASVVSTVQMLINA), 92–112 (FGLYQSLGIFIPLIVTNCIVI), 128–148 (ALDGFAMGMGATCALFVLGAL), and 182–202 (PFLLAMLPPGAFIGLGLLLAG).

This sequence belongs to the NqrDE/RnfAE family. In terms of assembly, the complex is composed of six subunits: RnfA, RnfB, RnfC, RnfD, RnfE and RnfG.

The protein localises to the cell inner membrane. Its function is as follows. Part of a membrane-bound complex that couples electron transfer with translocation of ions across the membrane. This Yersinia pseudotuberculosis serotype O:3 (strain YPIII) protein is Ion-translocating oxidoreductase complex subunit E.